The sequence spans 207 residues: Large ribosomal subunit protein eL13 (207 aa).

This sequence belongs to the eukaryotic ribosomal protein eL13 family. In terms of assembly, component of the 60S large ribosomal subunit (LSU).

It localises to the cytoplasm. Its function is as follows. Component of the ribosome, a large ribonucleoprotein complex responsible for the synthesis of proteins in the cell. The small ribosomal subunit (SSU) binds messenger RNAs (mRNAs) and translates the encoded message by selecting cognate aminoacyl-transfer RNA (tRNA) molecules. The large subunit (LSU) contains the ribosomal catalytic site termed the peptidyl transferase center (PTC), which catalyzes the formation of peptide bonds, thereby polymerizing the amino acids delivered by tRNAs into a polypeptide chain. The nascent polypeptides leave the ribosome through a tunnel in the LSU and interact with protein factors that function in enzymatic processing, targeting, and the membrane insertion of nascent chains at the exit of the ribosomal tunnel. As part of the LSU, it is probably required for its formation and the maturation of rRNAs. This chain is Large ribosomal subunit protein eL13 (rpl-13), found in Caenorhabditis elegans.